A 395-amino-acid chain; its full sequence is MVIIRAKQLVTALNMPWRYRDEVAVINDAAVVIRDGVIIDVGTWEEIKRRHPHANIWDFGDNLITPGLVDPHTHLLFAGSREDELERKLQGESYEEITRKGGGIYKTVKYTKETSDQELLNILQKRIQLATSFGTTTVEVKTGYGLDIDQELRLARILKSVKSPIDVVTTFLVHIPPPAGRENYVKEVLKAIPHAGTTYVDVFCDSIAFNVEETRTILKKAAEAGYKLRLHADELEYIGCSDLVEELPIDSADHLLNTPPENVRKIAKSGTVATLLPVTILTLRTSKKPPIDEMRRLRVPIAIGTDFSPNSWCLNMQTAIELAVYLLGLTPLEALIAATANAAYSLRLTDRGIIQPGKIADLVIWDVPNYHWLAYEIGRNKAKLVLKKGEPLRFL.

Fe(3+) is bound by residues H72 and H74. The Zn(2+) site is built by H72 and H74. 4-imidazolone-5-propanoate contacts are provided by R81, Y144, and H174. Y144 provides a ligand contact to N-formimidoyl-L-glutamate. Residue H231 coordinates Fe(3+). H231 is a binding site for Zn(2+). 4-imidazolone-5-propanoate is bound at residue E234. D306 serves as a coordination point for Fe(3+). D306 serves as a coordination point for Zn(2+).

The protein belongs to the metallo-dependent hydrolases superfamily. HutI family. Requires Zn(2+) as cofactor. The cofactor is Fe(3+).

The protein localises to the cytoplasm. It catalyses the reaction 4-imidazolone-5-propanoate + H2O = N-formimidoyl-L-glutamate. Its pathway is amino-acid degradation; L-histidine degradation into L-glutamate; N-formimidoyl-L-glutamate from L-histidine: step 3/3. Its function is as follows. Catalyzes the hydrolytic cleavage of the carbon-nitrogen bond in imidazolone-5-propanoate to yield N-formimidoyl-L-glutamate. It is the third step in the universal histidine degradation pathway. The polypeptide is Imidazolonepropionase (Pyrobaculum arsenaticum (strain DSM 13514 / JCM 11321 / PZ6)).